Reading from the N-terminus, the 228-residue chain is Urease accessory protein UreE (228 aa).

The disordered stretch occupies residues Pro188–His228. The segment covering Ser204 to His228 has biased composition (basic and acidic residues).

This sequence belongs to the UreE family.

It localises to the cytoplasm. In terms of biological role, involved in urease metallocenter assembly. Binds nickel. Probably functions as a nickel donor during metallocenter assembly. The sequence is that of Urease accessory protein UreE from Yersinia kristensenii.